We begin with the raw amino-acid sequence, 341 residues long: Ribulose-5-phosphate reductase 1 (341 aa).

4 residues coordinate Zn(2+): Cys38, His64, Glu65, and Glu144.

Belongs to the zinc-containing alcohol dehydrogenase family. As to quaternary structure, heterodimer together with TarI. Can also form a dimer of heterodimers. Zn(2+) serves as cofactor.

It carries out the reaction D-ribitol 5-phosphate + NADP(+) = D-ribulose 5-phosphate + NADPH + H(+). The protein operates within cell wall biogenesis; poly(ribitol phosphate) teichoic acid biosynthesis. Functionally, catalyzes the NADPH dependent reduction of D-ribulose 5-phosphate to D-ribitol 5-phosphate. The protein is Ribulose-5-phosphate reductase 1 of Staphylococcus aureus (strain NCTC 8325 / PS 47).